The chain runs to 104 residues: MSYAIFKHGGKQYKVVEGDIVLLDKMDKEPKALVELVEVLAVSKEGKLSFGKPFVNGAKIEAEVINEGRSKKVITFKKRRRKDSKTKRGFRRDFTRVRITKIVA.

The protein belongs to the bacterial ribosomal protein bL21 family. Part of the 50S ribosomal subunit. Contacts protein L20.

Functionally, this protein binds to 23S rRNA in the presence of protein L20. The sequence is that of Large ribosomal subunit protein bL21 from Helicobacter pylori (strain G27).